We begin with the raw amino-acid sequence, 475 residues long: Sulfate adenylyltransferase subunit 1 (475 aa).

Residues lysine 25–arginine 239 enclose the tr-type G domain. The G1 stretch occupies residues glycine 34–serine 41. Residue glycine 34 to serine 41 coordinates GTP. The interval glycine 92–aspartate 96 is G2. A G3 region spans residues aspartate 113–glycine 116. GTP contacts are provided by residues aspartate 113–histidine 117 and asparagine 168–aspartate 171. A G4 region spans residues asparagine 168–aspartate 171. Residues serine 206–leucine 208 are G5.

This sequence belongs to the TRAFAC class translation factor GTPase superfamily. Classic translation factor GTPase family. CysN/NodQ subfamily. As to quaternary structure, heterodimer composed of CysD, the smaller subunit, and CysN.

The enzyme catalyses sulfate + ATP + H(+) = adenosine 5'-phosphosulfate + diphosphate. The protein operates within sulfur metabolism; hydrogen sulfide biosynthesis; sulfite from sulfate: step 1/3. Functionally, with CysD forms the ATP sulfurylase (ATPS) that catalyzes the adenylation of sulfate producing adenosine 5'-phosphosulfate (APS) and diphosphate, the first enzymatic step in sulfur assimilation pathway. APS synthesis involves the formation of a high-energy phosphoric-sulfuric acid anhydride bond driven by GTP hydrolysis by CysN coupled to ATP hydrolysis by CysD. In Escherichia coli (strain ATCC 8739 / DSM 1576 / NBRC 3972 / NCIMB 8545 / WDCM 00012 / Crooks), this protein is Sulfate adenylyltransferase subunit 1.